The sequence spans 122 residues: Large ribosomal subunit protein uL14c (122 aa).

It belongs to the universal ribosomal protein uL14 family. In terms of assembly, part of the 50S ribosomal subunit.

Its subcellular location is the plastid. The protein resides in the chloroplast. In terms of biological role, binds to 23S rRNA. The polypeptide is Large ribosomal subunit protein uL14c (Chara vulgaris (Common stonewort)).